The following is a 131-amino-acid chain: Phosphoribosyl-AMP cyclohydrolase (131 aa).

Aspartate 89 contributes to the Mg(2+) binding site. Cysteine 90 serves as a coordination point for Zn(2+). Residues aspartate 91 and aspartate 93 each coordinate Mg(2+). Zn(2+) contacts are provided by cysteine 106 and cysteine 113.

It belongs to the PRA-CH family. In terms of assembly, homodimer. Mg(2+) serves as cofactor. Requires Zn(2+) as cofactor.

The protein localises to the cytoplasm. It carries out the reaction 1-(5-phospho-beta-D-ribosyl)-5'-AMP + H2O = 1-(5-phospho-beta-D-ribosyl)-5-[(5-phospho-beta-D-ribosylamino)methylideneamino]imidazole-4-carboxamide. The protein operates within amino-acid biosynthesis; L-histidine biosynthesis; L-histidine from 5-phospho-alpha-D-ribose 1-diphosphate: step 3/9. In terms of biological role, catalyzes the hydrolysis of the adenine ring of phosphoribosyl-AMP. The polypeptide is Phosphoribosyl-AMP cyclohydrolase (Pyrobaculum aerophilum (strain ATCC 51768 / DSM 7523 / JCM 9630 / CIP 104966 / NBRC 100827 / IM2)).